Here is a 240-residue protein sequence, read N- to C-terminus: Small ribosomal subunit protein uS2 (240 aa).

This sequence belongs to the universal ribosomal protein uS2 family.

The protein is Small ribosomal subunit protein uS2 of Haemophilus influenzae (strain 86-028NP).